Reading from the N-terminus, the 311-residue chain is ATP synthase gamma chain (311 aa).

This sequence belongs to the ATPase gamma chain family. In terms of assembly, F-type ATPases have 2 components, CF(1) - the catalytic core - and CF(0) - the membrane proton channel. CF(1) has five subunits: alpha(3), beta(3), gamma(1), delta(1), epsilon(1). CF(0) has three main subunits: a, b and c.

Its subcellular location is the cell membrane. Produces ATP from ADP in the presence of a proton gradient across the membrane. The gamma chain is believed to be important in regulating ATPase activity and the flow of protons through the CF(0) complex. This is ATP synthase gamma chain from Limosilactobacillus fermentum (strain NBRC 3956 / LMG 18251) (Lactobacillus fermentum).